Reading from the N-terminus, the 755-residue chain is Metabotropic glutamate receptor-like protein B (755 aa).

The signal sequence occupies residues 1-23 (MKNLISIILLILIFFNYSKFVKS). N-linked (GlcNAc...) asparagine glycans are attached at residues Asn16, Asn183, and Asn273. The Extracellular segment spans residues 24–385 (KNCKIAVLLS…VDYSSSMKLG (362 aa)). The chain crosses the membrane as a helical span at residues 386–406 (ITITSSICIFLCIISIIIVLV). Topologically, residues 407–417 (FRTARIIKSAS) are cytoplasmic. Residues 418-438 (PAFLFLILMGCILIFIGCIIF) traverse the membrane as a helical segment. At 439–455 (SQSPNEGTCRARVWLLS) the chain is on the extracellular side. The chain crosses the membrane as a helical span at residues 456–476 (IGYTIFLGSLLVKNWRIWLLF). Residues 477-492 (DNPKLKKRSITNWKLY) are Cytoplasmic-facing. Residues 493-513 (PWVAGILAADVLILAFWQGLG) traverse the membrane as a helical segment. The Extracellular portion of the chain corresponds to 514-541 (NIRSESRIGIDSLTKYQYTNVCSSNDQG). A helical transmembrane segment spans residues 542–562 (SIALYILLVFHGIKLLVACFI). Topologically, residues 563–578 (SFKIKVVDIDEFNESK) are cytoplasmic. A helical membrane pass occupies residues 579-599 (PIASSVYIITFCLFIVIPLMV). The Extracellular segment spans residues 600 to 607 (SPQSVTSQ). A helical transmembrane segment spans residues 608–628 (VTTICVCAIVTTLISIILLFG). At 629-755 (SKFYKMITQG…GEVEIDSNNL (127 aa)) the chain is on the cytoplasmic side. Disordered regions lie at residues 656–676 (QSLEKKKTGEEDDSESSEENG) and 691–729 (FSSDTEDDENETQQIDEEKDEQIAGSNEDIIQPEENIEE). Positions 694-710 (DTEDDENETQQIDEEKD) are enriched in acidic residues.

The protein in the N-terminal section; belongs to the BMP lipoprotein family. In the C-terminal section; belongs to the G-protein coupled receptor 3 family. GABA-B receptor subfamily.

The protein localises to the membrane. The chain is Metabotropic glutamate receptor-like protein B (grlB) from Dictyostelium discoideum (Social amoeba).